Consider the following 208-residue polypeptide: Protein-L-isoaspartate O-methyltransferase (208 aa).

Ser-59 is an active-site residue.

Belongs to the methyltransferase superfamily. L-isoaspartyl/D-aspartyl protein methyltransferase family.

The protein resides in the cytoplasm. It carries out the reaction [protein]-L-isoaspartate + S-adenosyl-L-methionine = [protein]-L-isoaspartate alpha-methyl ester + S-adenosyl-L-homocysteine. Functionally, catalyzes the methyl esterification of L-isoaspartyl residues in peptides and proteins that result from spontaneous decomposition of normal L-aspartyl and L-asparaginyl residues. It plays a role in the repair and/or degradation of damaged proteins. This Escherichia coli (strain K12 / MC4100 / BW2952) protein is Protein-L-isoaspartate O-methyltransferase.